The sequence spans 1304 residues: Zinc finger CCCH domain-containing protein 4 (1304 aa).

A compositionally biased stretch (pro residues) spans 1-33 (MEAVPGTPPPPPSESPPPPSPPPPSTPSPPPCS). Residues 1-387 (MEAVPGTPPP…SDHDKPHQQS (387 aa)) are disordered. The segment covering 53–73 (DREDGELEEGELEDDGAEEVQ) has biased composition (acidic residues). Over residues 80 to 99 (ERSRKEKGEKHHSDSEEEKS) the composition is skewed to basic and acidic residues. Residues Ser92 and Ser94 each carry the phosphoserine modification. The stretch at 94–128 (SEEEKSHRRLKRKRKKEREKEKRRSKKRRKSKHKR) forms a coiled coil. Residues 100-130 (HRRLKRKRKKEREKEKRRSKKRRKSKHKRHA) are compositionally biased toward basic residues. Positions 135–144 (DFSDFSDDSD) are enriched in acidic residues. Tyr155 is modified (phosphotyrosine). Residues 165–174 (SHQQYSSSHN) show a composition bias toward polar residues. Residues 194 to 218 (EDYENEQYGEYEGDEEEDMGKEDYD) show a composition bias toward acidic residues. Basic and acidic residues predominate over residues 219 to 235 (DFTKELNQYRRAKEGSS). Residues 238–251 (RGSRGRGRGYRGRG) show a composition bias toward basic residues. Gly residues predominate over residues 252–264 (SRGGSRGRGMGRG). Over residues 277-303 (PEDEEDLYEEEIEYGESEEPMGDDDYD) the composition is skewed to acidic residues. The segment covering 304 to 320 (DYSKELNQYRRSKDSRG) has biased composition (basic and acidic residues). Over residues 322 to 346 (GLSRGRGRGSRGGRGKGMGRGRGRG) the composition is skewed to basic residues. The segment covering 357 to 368 (NDDEDFYDDDMG) has biased composition (acidic residues). A compositionally biased stretch (basic and acidic residues) spans 376–387 (RRSDHDKPHQQS). C3H1-type zinc fingers lie at residues 389 to 416 (KKGK…HDIE), 418 to 445 (PKKR…HGDF), and 446 to 469 (PCKL…HDPL). The span at 485 to 495 (AEAGAEDEKEV) shows a compositional bias: acidic residues. Residues 485 to 567 (AEAGAEDEKE…LPTHEPLSPQ (83 aa)) are disordered. Pro residues-rich tracts occupy residues 506–529 (LPKP…PAPT) and 538–556 (GGPP…PPQM). An Asymmetric dimethylarginine modification is found at Arg599. Disordered regions lie at residues 601–691 (PGPG…DSPH), 719–970 (PGLV…SHIK), and 994–1304 (LPIP…PFCQ). Residues 603–622 (PGGPSGPMGPGPNMGPPGPM) show a composition bias toward pro residues. The segment covering 628-660 (PDMHPDMHPDMHPDMHPDMHPDMHPDMHPDMHP) has biased composition (basic and acidic residues). The span at 669-683 (NPGPPMGPGGPPMMP) shows a compositional bias: pro residues. A coiled-coil region spans residues 778–809 (ALYLRIQQKQQEEERARRLAESSKQDRENEEG). Positions 787–804 (QQEEERARRLAESSKQDR) are enriched in basic and acidic residues. Phosphoserine occurs at positions 816 and 817. Residues 824 to 852 (SSVTSILKTLRQQTSSRPQASVGEPSSSG) show a composition bias toward polar residues. The segment covering 869–884 (SDPRLSRDPRLSRHAE) has biased composition (basic and acidic residues). Ser913, Ser916, and Ser917 each carry phosphoserine. Positions 913 to 929 (SLHSSPAGPSSSKGQPP) are enriched in low complexity. Residues 994–1005 (LPIPKQDVPPVP) are compositionally biased toward pro residues. Polar residues-rich tracts occupy residues 1028 to 1044 (NTRQ…SGSN) and 1058 to 1067 (VNVNTPGQSE). A compositionally biased stretch (basic and acidic residues) spans 1068 to 1085 (KPSDPRVRKTPTDPRLQK). Low complexity-rich tracts occupy residues 1098–1129 (PCPT…VLAA) and 1137–1146 (SSGQSSVLSG). 4 positions are modified to phosphoserine: Ser1104, Ser1109, Ser1111, and Ser1115. At Thr1119 the chain carries Phosphothreonine. Residues 1204-1220 (KASTDGATATDRYNSYN) show a composition bias toward polar residues. Low complexity predominate over residues 1225–1235 (KATAAPTAASS). Ser1270 and Ser1276 each carry phosphoserine.

It belongs to the suppressor of sable family. Interacts with WDR82.

It is found in the chromosome. RNA-binding protein that suppresses transcription of long non-coding RNAs (lncRNAs). LncRNAs are defined as transcripts more than 200 nucleotides that are not translated into protein. Together with WDR82, part of a transcription termination checkpoint that promotes transcription termination of lncRNAs and their subsequent degradation by the exosome. The transcription termination checkpoint is activated by the inefficiently spliced first exon of lncRNAs. The polypeptide is Zinc finger CCCH domain-containing protein 4 (Mus musculus (Mouse)).